A 446-amino-acid chain; its full sequence is D(1A) dopamine receptor (446 aa).

Residues 1-23 (MRTLNTSTMDGTGLVVERDFSFR) are Extracellular-facing. Asparagine 5 is a glycosylation site (N-linked (GlcNAc...) asparagine). The helical transmembrane segment at 24–49 (ILTACFLSLLILSTLLGNTLVCAAVI) threads the bilayer. Residues 50–60 (RFRHLRSKVTN) are Cytoplasmic-facing. The helical transmembrane segment at 61-87 (FFVISLAVSDLLVAVLVMPWKAVAEIA) threads the bilayer. The Extracellular portion of the chain corresponds to 88–96 (GFWPFGSFC). Residues cysteine 96 and cysteine 186 are joined by a disulfide bond. The chain crosses the membrane as a helical span at residues 97–119 (NIWVAFDIMCSTASILNLCVISV). Over 120 to 138 (DRYWAISSPFRYERKMTPK) the chain is Cytoplasmic. A helical transmembrane segment spans residues 139-163 (AAFILISVAWTLSVLISFIPVQLSW). The Extracellular segment spans residues 164–192 (HKAKPTSPSDGNVTSLGKTTHNCDSSLSR). The chain crosses the membrane as a helical span at residues 193–218 (TYAISSSLISFYIPVAIMIVTYTRIY). The Cytoplasmic segment spans residues 219-272 (RIAQKQIRRISALERAAVHAKNCQTTAGNGNPAECSQPESSFKMSFKRETKVLK). The helical transmembrane segment at 273–299 (TLSVIMGVFVCCWLPFFILNCMVPFCG) threads the bilayer. Topologically, residues 300–312 (SGETKPFCIDSIT) are extracellular. A helical transmembrane segment spans residues 313-337 (FDVFVWFGWANSSLNPIIYAFNADF). Over 338-446 (RKAFSTLLGC…PITQNGQHPT (109 aa)) the chain is Cytoplasmic. 2 S-palmitoyl cysteine lipidation sites follow: cysteine 347 and cysteine 351.

Belongs to the G-protein coupled receptor 1 family. As to quaternary structure, interacts with DNAJC14 via its C-terminus. Interacts with DRD2. Interacts with DORIP1.

It is found in the cell membrane. The protein resides in the endoplasmic reticulum membrane. It localises to the cell projection. Its subcellular location is the cilium membrane. The protein localises to the dendrite. It is found in the dendritic spine. Its function is as follows. Dopamine receptor whose activity is mediated by G proteins which activate adenylyl cyclase. This chain is D(1A) dopamine receptor (DRD1), found in Sus scrofa (Pig).